Here is a 181-residue protein sequence, read N- to C-terminus: Probable pyruvoyl-dependent arginine decarboxylase (181 aa).

A Pyruvic acid (Ser) modification is found at S43.

The protein belongs to the PdaD family. It depends on pyruvate as a cofactor.

It catalyses the reaction L-arginine + H(+) = agmatine + CO2. The chain is Probable pyruvoyl-dependent arginine decarboxylase from Chlorobium phaeovibrioides (strain DSM 265 / 1930) (Prosthecochloris vibrioformis (strain DSM 265)).